Reading from the N-terminus, the 250-residue chain is Small ribosomal subunit protein uS2 (250 aa).

This sequence belongs to the universal ribosomal protein uS2 family.

This Delftia acidovorans (strain DSM 14801 / SPH-1) protein is Small ribosomal subunit protein uS2.